A 659-amino-acid chain; its full sequence is RNA-binding protein MIP6 (659 aa).

Residues 1 to 27 show a composition bias toward polar residues; sequence MPNSHGNVLNNISLNSKQNPRSISKSC. Positions 1–35 are disordered; sequence MPNSHGNVLNNISLNSKQNPRSISKSCPNDKDARQ. 3 consecutive RRM domains span residues 111–189, 199–267, and 313–389; these read NSLF…PSMK, TNVF…GNKI, and KTIL…PGKD.

As to quaternary structure, interacts with MEX67.

The protein resides in the cytoplasm. The sequence is that of RNA-binding protein MIP6 (MIP6) from Saccharomyces cerevisiae (strain ATCC 204508 / S288c) (Baker's yeast).